We begin with the raw amino-acid sequence, 369 residues long: DNA replication and repair protein RecF (369 aa).

ATP is bound at residue 30-37; that stretch reads GDNAQGKT.

The protein belongs to the RecF family.

The protein localises to the cytoplasm. The RecF protein is involved in DNA metabolism; it is required for DNA replication and normal SOS inducibility. RecF binds preferentially to single-stranded, linear DNA. It also seems to bind ATP. The protein is DNA replication and repair protein RecF of Streptococcus equi subsp. zooepidemicus (strain MGCS10565).